We begin with the raw amino-acid sequence, 500 residues long: Centrosomal protein of 57 kDa (500 aa).

Positions 1–17 are enriched in low complexity; the sequence is MAAASVSAASGSHLSNS. 2 disordered regions span residues 1–34 and 43–62; these read MAAA…HSSS and KPFL…LAYP. The segment covering 18 to 34 has biased composition (polar residues); it reads FAEPSRSNGSMVRHSSS. 2 positions are modified to phosphoserine: Ser53 and Ser55. The centrosome localization domain (CLD) stretch occupies residues 58–239; that stretch reads TLAYPESNSR…KAAELQTGLE (182 aa). Coiled-coil stretches lie at residues 63-242 and 392-492; these read ESNS…ETNR and ELKD…NSLQ. Residues 277–491 form a mediates interaction with microtubules region; sequence GAQPHYRLCL…KDMQSIQNSL (215 aa). A compositionally biased stretch (basic and acidic residues) spans 434–450; the sequence is KKELKATKKTLDEERNS. The tract at residues 434-472 is disordered; it reads KKELKATKKTLDEERNSSSRSGITGTTNKKDFMKLRPGE. Polar residues predominate over residues 451-460; it reads SSRSGITGTT. The span at 461-471 shows a compositional bias: basic and acidic residues; that stretch reads NKKDFMKLRPG.

This sequence belongs to the translokin family. As to quaternary structure, homodimer and homooligomer. Interacts with microtubules. Interacts with FGF2 and RAP80. Does not interact with FGF1 or FGF2 isoform 24 kDa. As to expression, ubiquitous.

It is found in the nucleus. The protein resides in the cytoplasm. It localises to the cytoskeleton. The protein localises to the microtubule organizing center. Its subcellular location is the centrosome. Functionally, centrosomal protein which may be required for microtubule attachment to centrosomes. May act by forming ring-like structures around microtubules. Mediates nuclear translocation and mitogenic activity of the internalized growth factor FGF2, but that of FGF1. In Homo sapiens (Human), this protein is Centrosomal protein of 57 kDa (CEP57).